The chain runs to 128 residues: Large ribosomal subunit protein bL17 (128 aa).

This sequence belongs to the bacterial ribosomal protein bL17 family. Part of the 50S ribosomal subunit. Contacts protein L32.

This chain is Large ribosomal subunit protein bL17, found in Streptococcus mutans serotype c (strain ATCC 700610 / UA159).